Reading from the N-terminus, the 82-residue chain is MADQEMQKLIKRINELAKKAKEEGLSDLEIIERKDLRQKYLKKFRESFRSQVEMMQIFDKEGKEVTPEKVKEVQRKKGLRDD.

It belongs to the UPF0291 family.

The protein resides in the cytoplasm. This chain is UPF0291 protein PEPE_0871, found in Pediococcus pentosaceus (strain ATCC 25745 / CCUG 21536 / LMG 10740 / 183-1w).